The primary structure comprises 284 residues: Pantothenate synthetase (284 aa).

34–41 (MGALHAGH) contributes to the ATP binding site. Catalysis depends on H41, which acts as the Proton donor. Q65 is a binding site for (R)-pantoate. Q65 contributes to the beta-alanine binding site. Residue 151–154 (GEKD) coordinates ATP. Q157 lines the (R)-pantoate pocket. ATP-binding positions include L180 and 188-191 (MSSR).

Belongs to the pantothenate synthetase family. In terms of assembly, homodimer.

The protein localises to the cytoplasm. The enzyme catalyses (R)-pantoate + beta-alanine + ATP = (R)-pantothenate + AMP + diphosphate + H(+). The protein operates within cofactor biosynthesis; (R)-pantothenate biosynthesis; (R)-pantothenate from (R)-pantoate and beta-alanine: step 1/1. Catalyzes the condensation of pantoate with beta-alanine in an ATP-dependent reaction via a pantoyl-adenylate intermediate. This is Pantothenate synthetase from Paramagnetospirillum magneticum (strain ATCC 700264 / AMB-1) (Magnetospirillum magneticum).